The primary structure comprises 416 residues: Gamma-glutamyl phosphate reductase (416 aa).

It belongs to the gamma-glutamyl phosphate reductase family.

It is found in the cytoplasm. The catalysed reaction is L-glutamate 5-semialdehyde + phosphate + NADP(+) = L-glutamyl 5-phosphate + NADPH + H(+). The protein operates within amino-acid biosynthesis; L-proline biosynthesis; L-glutamate 5-semialdehyde from L-glutamate: step 2/2. In terms of biological role, catalyzes the NADPH-dependent reduction of L-glutamate 5-phosphate into L-glutamate 5-semialdehyde and phosphate. The product spontaneously undergoes cyclization to form 1-pyrroline-5-carboxylate. The protein is Gamma-glutamyl phosphate reductase of Streptococcus equi subsp. zooepidemicus (strain MGCS10565).